Reading from the N-terminus, the 148-residue chain is Snaclec crotocetin (148 aa).

The signal sequence occupies residues 1–23; the sequence is MGRLVFVSFGLLVVFLSLTGTGA. Disulfide bonds link Cys-27–Cys-38, Cys-55–Cys-144, and Cys-121–Cys-136. Positions 34–145 constitute a C-type lectin domain; it reads YEGHCYKVFK…CSKTHKVVCK (112 aa).

It belongs to the snaclec family. In terms of assembly, heterodimer; disulfide-linked. Expressed by the venom gland.

Its subcellular location is the secreted. Functionally, interferes with one step of hemostasis (modulation of platelet aggregation, or coagulation cascade, for example). The sequence is that of Snaclec crotocetin from Crotalus durissus terrificus (South American rattlesnake).